The chain runs to 1141 residues: Envelopment polyprotein (1141 aa).

An N-terminal signal peptide occupies residues 1–19 (MFCLCLSLLGLLLCWPAAT). Residues 20 to 489 (RNLLELKVEC…CVPGLHGWAT (470 aa)) are Lumenal-facing. 6 disulfide bridges follow: Cys-29–Cys-154, Cys-63–Cys-160, Cys-112–Cys-131, Cys-136–Cys-141, Cys-178–Cys-188, and Cys-213–Cys-252. Asn-137 carries an N-linked (GlcNAc...) asparagine; by host glycan. A glycan (N-linked (GlcNAc...) asparagine; by host) is linked at Asn-352. Intrachain disulfides connect Cys-381/Cys-440, Cys-385/Cys-394, Cys-410/Cys-429, and Cys-457/Cys-480. Asn-404 carries N-linked (GlcNAc...) asparagine; by host glycosylation. The helical transmembrane segment at 490-510 (ISLLITFCFGWLAIPLLSMII) threads the bilayer. Residues 511–632 (IRFLLIFTYL…LSMFRYKSKC (122 aa)) lie on the Cytoplasmic side of the membrane. The segment at 521-538 (CSKYSTDSKFKLIIEKVK) is binding to the ribonucleoprotein. CCHC-type zinc fingers lie at residues 550 to 570 (CEVCQQGCETAKELESHKKSC) and 575 to 596 (CPYCLNPTEATESALQAHFKVC). Binding to the ribonucleoprotein regions lie at residues 593–610 (FKVCKLTTRFQENLKKSL), 597–608 (KLTTRFQENLKK), and 616–630 (KRGLYRTLSMFRYKS). The inhibition of interferon induction stretch occupies residues 612 to 653 (TYEPKRGLYRTLSMFRYKSKCYVGLVWCILLTMELIVWAASA). The ITAM domain occupies 616-639 (KRGLYRTLSMFRYKSKCYVGLVWC). 2 positions are modified to phosphotyrosine: Tyr-620 and Tyr-633. Positions 620–623 (YRTL) match the YxxL motif. A helical membrane pass occupies residues 633–653 (YVGLVWCILLTMELIVWAASA). Over 654-1109 (ETINLEPGWT…EWLLGILSGN (456 aa)) the chain is Lumenal. 8 disulfides stabilise this stretch: Cys-740-Cys-775, Cys-744-Cys-782, Cys-756-Cys-889, Cys-770-Cys-900, Cys-785-Cys-908, Cys-811-Cys-820, Cys-828-Cys-837, and Cys-868-Cys-872. The segment at 762-782 (FEFETGWGCNPPDCPGVGTGC) is fusion loop. The N-linked (GlcNAc...) asparagine; by host glycan is linked to Asn-932. 5 disulfides stabilise this stretch: Cys-974/Cys-1004, Cys-997/Cys-1049, Cys-1014/Cys-1019, Cys-1050/Cys-1055, and Cys-1089/Cys-1093. The chain crosses the membrane as a helical span at residues 1110–1130 (WMVVAVLIALFIFSLLLFSLC). The tract at residues 1126 to 1141 (LFSLCCPRRQNYKKNK) is binding to the ribonucleoprotein. At 1131–1141 (CPRRQNYKKNK) the chain is on the cytoplasmic side.

The protein belongs to the hantavirus envelope glycoprotein family. In terms of assembly, homodimer. Homotetramer; forms heterotetrameric Gn-Gc spikes in the pre-fusion conformation. Interacts (via C-terminus) with the nucleoprotein. Interacts with host TUFM; this interaction contributes to the virus-induced degradation of mitochondria by autophagy, which leads to degradation of host MAVS and inhibition of type I interferon (IFN) responses. Interacts with host MAP1LC3B; this interaction contributes to the virus-induced degradation of mitochondria by autophagy, which leads to degradation of host MAVS and inhibition of type I interferon (IFN) responses. Homodimer. Homotetramer; forms heterotetrameric Gn-Gc spikes in the pre-fusion conformation. Homotrimer; forms homotrimer in the post-fusion conformation at acidic pH. Interacts (via C-terminus) with the nucleoprotein. Post-translationally, envelope polyprotein precursor is quickly cleaved in vivo just after synthesis, presumably by host signal peptidase.

The protein resides in the virion membrane. The protein localises to the host cell surface. It is found in the host Golgi apparatus membrane. Its subcellular location is the host endoplasmic reticulum membrane. It localises to the host mitochondrion. Functionally, forms homotetramers with glycoprotein C at the surface of the virion. Attaches the virion to host cell receptors including integrin alpha5/ITGB1. This attachment induces virion internalization predominantly through clathrin-dependent endocytosis. Mediates the assembly and budding of infectious virus particles through its interaction with the nucleocapsid protein and the viral genome. May dysregulate normal immune and endothelial cell responses through an ITAM motif. Translocates to mitochondria, binds to host TUFM and recruits MAP1LC3B. These interactions induce mitochondrial autophagy and therefore destruction of host MAVS leading to inhibition of type I interferon (IFN) responses. Concomitant breakdown of glycoprotein N is apparently prevented by the nucleoprotein that may inhibit Gn-stimulated autophagosome-lysosome fusion. Interacts with the viral genomic RNA. Inhibits the host RIG-I/TBK1 pathway by disrupting the formation of TBK1-TRAF3 complexes and downstream signaling responses required for IFN-beta transcription. In terms of biological role, forms homotetramers with glycoprotein N at the surface of the virion. Attaches the virion to host cell receptors including integrin ITGAV/ITGB3. This attachment induces virion internalization predominantly through clathrin-dependent endocytosis. Class II fusion protein that promotes fusion of viral membrane with host endosomal membrane after endocytosis of the virion. The polypeptide is Envelopment polyprotein (GP) (Tula orthohantavirus (TULV)).